The primary structure comprises 920 residues: Isoleucine--tRNA ligase (920 aa).

Positions 58–68 (PYANGHLHLGH) match the 'HIGH' region motif. L-isoleucyl-5'-AMP is bound at residue Glu-569. Positions 610 to 614 (KMSKS) match the 'KMSKS' region motif. Position 613 (Lys-613) interacts with ATP. The Zn(2+) site is built by Cys-895, Cys-898, Cys-910, and Cys-913.

It belongs to the class-I aminoacyl-tRNA synthetase family. IleS type 1 subfamily. As to quaternary structure, monomer. Requires Zn(2+) as cofactor.

It localises to the cytoplasm. It carries out the reaction tRNA(Ile) + L-isoleucine + ATP = L-isoleucyl-tRNA(Ile) + AMP + diphosphate. Its function is as follows. Catalyzes the attachment of isoleucine to tRNA(Ile). As IleRS can inadvertently accommodate and process structurally similar amino acids such as valine, to avoid such errors it has two additional distinct tRNA(Ile)-dependent editing activities. One activity is designated as 'pretransfer' editing and involves the hydrolysis of activated Val-AMP. The other activity is designated 'posttransfer' editing and involves deacylation of mischarged Val-tRNA(Ile). This chain is Isoleucine--tRNA ligase, found in Helicobacter pylori (strain P12).